The primary structure comprises 227 residues: Triosephosphate isomerase (227 aa).

9–11 is a binding site for substrate; that stretch reads NFK. His93 (electrophile) is an active-site residue. The Proton acceptor role is filled by Glu141. Substrate-binding positions include Ile146, Gly180, and 201 to 202; that span reads AS.

This sequence belongs to the triosephosphate isomerase family. In terms of assembly, homotetramer; dimer of dimers.

It localises to the cytoplasm. The enzyme catalyses D-glyceraldehyde 3-phosphate = dihydroxyacetone phosphate. It functions in the pathway carbohydrate biosynthesis; gluconeogenesis. The protein operates within carbohydrate degradation; glycolysis; D-glyceraldehyde 3-phosphate from glycerone phosphate: step 1/1. Involved in the gluconeogenesis. Catalyzes stereospecifically the conversion of dihydroxyacetone phosphate (DHAP) to D-glyceraldehyde-3-phosphate (G3P). The chain is Triosephosphate isomerase from Saccharolobus solfataricus (strain ATCC 35092 / DSM 1617 / JCM 11322 / P2) (Sulfolobus solfataricus).